Here is a 119-residue protein sequence, read N- to C-terminus: uncharacterized protein (119 aa).

This is an uncharacterized protein from Lactococcus lactis subsp. lactis (strain IL1403) (Streptococcus lactis).